Reading from the N-terminus, the 196-residue chain is Late protein I196L (196 aa).

2 repeat units span residues 28–48 (SNYL…PTTS) and 49–70 (SNYL…TTTS). The 3; approximate repeat unit spans residues 71 to 92 (SNYLTSAIPNIISDKEDDTPFS).

The protein belongs to the asfivirus I196L family.

The sequence is that of Late protein I196L from African swine fever virus (strain Badajoz 1971 Vero-adapted) (Ba71V).